Consider the following 348-residue polypeptide: Cell surface glycoprotein CD200 receptor 1 (348 aa).

An N-terminal signal peptide occupies residues methionine 1–alanine 24. The Extracellular portion of the chain corresponds to glutamine 29 to lysine 265. N-linked (GlcNAc...) asparagine glycans are attached at residues asparagine 31, asparagine 60, asparagine 69, asparagine 116, asparagine 122, asparagine 185, asparagine 218, asparagine 233, and asparagine 247. 2 cysteine pairs are disulfide-bonded: cysteine 83-cysteine 155 and cysteine 107-cysteine 123. Positions proline 160–tyrosine 251 constitute an Ig-like C2-type domain. Disulfide bonds link cysteine 190–cysteine 239 and cysteine 209–cysteine 227. The helical transmembrane segment at leucine 266–leucine 286 threads the bilayer. At leucine 287 to leucine 348 the chain is on the cytoplasmic side.

The protein belongs to the CD200R family. CD200 and CD200R1 interact via their respective N-terminal Ig-like domains. Interacts with Human herpesvirus 8 vOX2 protein. As to quaternary structure, (Microbial infection) Interacts with human herpesvirus 8/HHV-8 protein vOX2/K14. In terms of tissue distribution, expressed in granulocytes, monocytes, most T-cells, neutrophils, basophils and a subset of NK, NKT and B-cells (at protein level). Expressed in bone marrow, lymph nodes, spleen, lung, liver, spinal cord, kidney. Expressed in monocyte-derived dendritic and mast cells.

It localises to the cell membrane. Its subcellular location is the secreted. Its function is as follows. Inhibitory receptor for the CD200/OX2 cell surface glycoprotein. Limits inflammation by inhibiting the expression of pro-inflammatory molecules including TNF-alpha, interferons, and inducible nitric oxide synthase (iNOS) in response to selected stimuli. Also binds to HHV-8 K14 viral CD200 homolog with identical affinity and kinetics as the host CD200. The chain is Cell surface glycoprotein CD200 receptor 1 (CD200R1) from Homo sapiens (Human).